The sequence spans 331 residues: Biotin synthase (331 aa).

The 226-residue stretch at 52 to 277 (PEVEVEGIVS…RTILRYAGGR (226 aa)) folds into the Radical SAM core domain. 3 residues coordinate [4Fe-4S] cluster: Cys67, Cys71, and Cys74. [2Fe-2S] cluster contacts are provided by Cys110, Cys202, and Arg272.

This sequence belongs to the radical SAM superfamily. Biotin synthase family. In terms of assembly, homodimer. The cofactor is [4Fe-4S] cluster. It depends on [2Fe-2S] cluster as a cofactor.

It catalyses the reaction (4R,5S)-dethiobiotin + (sulfur carrier)-SH + 2 reduced [2Fe-2S]-[ferredoxin] + 2 S-adenosyl-L-methionine = (sulfur carrier)-H + biotin + 2 5'-deoxyadenosine + 2 L-methionine + 2 oxidized [2Fe-2S]-[ferredoxin]. The protein operates within cofactor biosynthesis; biotin biosynthesis; biotin from 7,8-diaminononanoate: step 2/2. Functionally, catalyzes the conversion of dethiobiotin (DTB) to biotin by the insertion of a sulfur atom into dethiobiotin via a radical-based mechanism. This Salinispora arenicola (strain CNS-205) protein is Biotin synthase.